A 1119-amino-acid polypeptide reads, in one-letter code: Leucine-rich repeats and immunoglobulin-like domains protein 3 (1119 aa).

The signal sequence occupies residues 1 to 24; it reads MSAPSLRARAAGLGLLLCAVLGRA. In terms of domain architecture, LRRNT spans 38–74; the sequence is PSGVAAERPCPTTCRCLGDLLDCSRKRLARLPEPLPS. LRR repeat units follow at residues 75–96, 99–120, 122–142, 146–167, 168–189, 193–214, 216–237, 240–261, 264–285, 288–309, 312–333, 336–357, 360–382, 387–408, and 411–432; these read WVARLDLSHNRLSFIKASSMSH, SLREVKLNNNELETIPNLGPVS, NITLLSLAGNRIVEILPEHLK, SLETLDLSSNNISELQTAFPAL, QLKYLYLNSNRVTSMEPGYFDN, TLLVLKLNRNRISAIPPKMFKL, QLQHLELNRNKIKNVDGLTFQG, ALKSLKMQRNGVTKLMDGAFWG, NMEILQLDHNNLTEITKGWLYG, MLQELHLSQNAINRISPDAWEF, KLSELDLTFNHLSRLDDSSFLG, LLNTLHIGNNRVSYIADCAFRG, SLKTLDLKNNEISWTIEDMNGAF, KLRRLILQGNRIRSITKKAFTG, and ALEHLDLSDNAIMSLQGNAFSQ. N-linked (GlcNAc...) asparagine glycans are attached at residues N122 and N156. N274 carries N-linked (GlcNAc...) asparagine glycosylation. Residues N442, N469, and N515 are each glycosylated (N-linked (GlcNAc...) asparagine). The 52-residue stretch at 444–495 folds into the LRRCT domain; sequence SSLLCDCQLKWLPQWVAENNFQSFVNASCAHPQLLKGRSIFAVSPDGFVCDD. Ig-like C2-type domains follow at residues 499-598, 603-692, and 697-783; these read PQIT…AKLT, PSFT…ATLT, and PSFL…VRLS. 2 cysteine pairs are disulfide-bonded: C520–C581 and C624–C676. N-linked (GlcNAc...) asparagine glycans are attached at residues N688 and N729. C718 and C767 form a disulfide bridge. The chain crosses the membrane as a helical span at residues 810–830; it reads VVIIAVVCCVVGTSLVWVVII. Residues N905, N987, N999, and N1016 are each glycosylated (N-linked (GlcNAc...) asparagine). The tract at residues 1073-1093 is disordered; the sequence is SSPDLDSGSEEDGKERTDFQE. The span at 1083–1093 shows a compositional bias: basic and acidic residues; that stretch reads EDGKERTDFQE.

In terms of assembly, interacts with EGFR, ERBB2 and ERBB4 (in vitro). As to expression, widely expressed.

Its subcellular location is the cell membrane. It localises to the cytoplasmic vesicle membrane. In terms of biological role, may play a role in craniofacial and inner ear morphogenesis during embryonic development. May act within the otic vesicle epithelium to control formation of the lateral semicircular canal in the inner ear, possibly by restricting the expression of NTN1. The protein is Leucine-rich repeats and immunoglobulin-like domains protein 3 (LRIG3) of Homo sapiens (Human).